A 71-amino-acid polypeptide reads, in one-letter code: Large ribosomal subunit protein bL32c (71 aa).

Residues 1–24 (MAVPKKRTSRSKKKIRKNVRKGKK) form a disordered region.

The protein belongs to the bacterial ribosomal protein bL32 family.

The protein localises to the plastid. The protein resides in the chloroplast. The sequence is that of Large ribosomal subunit protein bL32c from Pinus koraiensis (Korean pine).